We begin with the raw amino-acid sequence, 560 residues long: IQ motif and ankyrin repeat domain-containing protein 1 (560 aa).

The segment at 1–72 is disordered; the sequence is MDSKKGRPKA…DRAARAIQGA (72 aa). Residues 62–91 enclose the IQ domain; sequence EDRAARAIQGAFRQLRARRELARRREERRE. ANK repeat units follow at residues 191 to 223 and 224 to 253; these read YGNT…SKGA and FGPT…DPRV. Residues 281–398 are a coiled coil; that stretch reads LTEAMLQNME…RLELREQTQE (118 aa).

The chain is IQ motif and ankyrin repeat domain-containing protein 1 from Homo sapiens (Human).